The chain runs to 467 residues: UDP-N-acetylmuramate--L-alanine ligase (467 aa).

An ATP-binding site is contributed by 114-120 (GTHGKTT).

It belongs to the MurCDEF family.

It localises to the cytoplasm. It carries out the reaction UDP-N-acetyl-alpha-D-muramate + L-alanine + ATP = UDP-N-acetyl-alpha-D-muramoyl-L-alanine + ADP + phosphate + H(+). The protein operates within cell wall biogenesis; peptidoglycan biosynthesis. Its function is as follows. Cell wall formation. The polypeptide is UDP-N-acetylmuramate--L-alanine ligase (Bradyrhizobium sp. (strain BTAi1 / ATCC BAA-1182)).